The primary structure comprises 421 residues: Enolase (421 aa).

Glutamine 165 serves as a coordination point for (2R)-2-phosphoglycerate. The Proton donor role is filled by glutamate 207. Mg(2+)-binding residues include aspartate 244, glutamate 285, and aspartate 312. (2R)-2-phosphoglycerate is bound by residues lysine 337, arginine 366, serine 367, and lysine 388. Lysine 337 acts as the Proton acceptor in catalysis.

Belongs to the enolase family. Mg(2+) serves as cofactor.

It is found in the cytoplasm. It localises to the secreted. Its subcellular location is the cell surface. It carries out the reaction (2R)-2-phosphoglycerate = phosphoenolpyruvate + H2O. Its pathway is carbohydrate degradation; glycolysis; pyruvate from D-glyceraldehyde 3-phosphate: step 4/5. Catalyzes the reversible conversion of 2-phosphoglycerate (2-PG) into phosphoenolpyruvate (PEP). It is essential for the degradation of carbohydrates via glycolysis. The polypeptide is Enolase (Ehrlichia chaffeensis (strain ATCC CRL-10679 / Arkansas)).